The primary structure comprises 152 residues: Large ribosomal subunit protein bL9 (152 aa).

This sequence belongs to the bacterial ribosomal protein bL9 family.

In terms of biological role, binds to the 23S rRNA. The polypeptide is Large ribosomal subunit protein bL9 (Nostoc sp. (strain PCC 7120 / SAG 25.82 / UTEX 2576)).